Here is a 1894-residue protein sequence, read N- to C-terminus: Plexin-A4 (1894 aa).

The N-terminal stretch at 1-23 is a signal peptide; the sequence is MKAMPWNWTCLLSHLLMVGMGSS. Residues 24–507 form the Sema domain; it reads TLLTRQPAPL…SERQLTRVPV (484 aa). Over 24-1237 the chain is Extracellular; the sequence is TLLTRQPAPL…IAPDSPLSLP (1214 aa). 10 disulfides stabilise this stretch: Cys95/Cys104, Cys130/Cys138, Cys284/Cys405, Cys300/Cys356, Cys374/Cys393, Cys510/Cys527, Cys516/Cys558, Cys519/Cys536, Cys530/Cys542, and Cys593/Cys612. One can recognise a PSI 1 domain in the interval 509-559; sequence SCGQYQSCGECLGSGDPHCGWCVLHNTCTRKERCERSKEPRRFASEMKQCV. The N-linked (GlcNAc...) asparagine glycan is linked to Asn655. 2 PSI domains span residues 655-702 and 803-856; these read NCSV…EDCP and KCGA…SKCT. IPT/TIG domains are found at residues 858 to 952, 954 to 1037, 1040 to 1139, and 1142 to 1230; these read PRIT…YYFM, LTLS…FQYV, PTIV…FTYY, and PVFE…YIAP. N-linked (GlcNAc...) asparagine glycosylation is found at Asn1007, Asn1132, and Asn1180. Residues 1238 to 1258 traverse the membrane as a helical segment; that stretch reads AIVSIAVAGGLLIIFIVAVLI. Topologically, residues 1259–1894 are cytoplasmic; the sequence is AYKRKSRESD…QVITLMSLDS (636 aa). N6-acetyllysine is present on Lys1350.

The protein belongs to the plexin family. In terms of assembly, interacts with NRP1 and NRP2.

Its subcellular location is the cell membrane. Coreceptor for SEMA3A. Necessary for signaling by class 3 semaphorins and subsequent remodeling of the cytoskeleton. Plays a role in axon guidance in the developing nervous system. Class 3 semaphorins bind to a complex composed of a neuropilin and a plexin. The plexin modulates the affinity of the complex for specific semaphorins, and its cytoplasmic domain is required for the activation of down-stream signaling events in the cytoplasm. This Homo sapiens (Human) protein is Plexin-A4 (PLXNA4).